The sequence spans 506 residues: ATP synthase subunit alpha (506 aa).

170-177 (GDRQTGKT) is an ATP binding site.

This sequence belongs to the ATPase alpha/beta chains family. F-type ATPases have 2 components, CF(1) - the catalytic core - and CF(0) - the membrane proton channel. CF(1) has five subunits: alpha(3), beta(3), gamma(1), delta(1), epsilon(1). CF(0) has four main subunits: a(1), b(1), b'(1) and c(9-12).

The protein localises to the cellular thylakoid membrane. The enzyme catalyses ATP + H2O + 4 H(+)(in) = ADP + phosphate + 5 H(+)(out). Produces ATP from ADP in the presence of a proton gradient across the membrane. The alpha chain is a regulatory subunit. The chain is ATP synthase subunit alpha from Parasynechococcus marenigrum (strain WH8102).